The chain runs to 283 residues: Elongation factor Ts (283 aa).

Residues 80-83 are involved in Mg(2+) ion dislocation from EF-Tu; it reads TDFV.

It belongs to the EF-Ts family.

It is found in the cytoplasm. In terms of biological role, associates with the EF-Tu.GDP complex and induces the exchange of GDP to GTP. It remains bound to the aminoacyl-tRNA.EF-Tu.GTP complex up to the GTP hydrolysis stage on the ribosome. The protein is Elongation factor Ts of Haemophilus ducreyi (strain 35000HP / ATCC 700724).